The chain runs to 241 residues: Exosome complex component RRP41 homolog (241 aa).

An N-acetylmethionine modification is found at M1.

It belongs to the RNase PH family. Component of the RNA exosome complex. Interacts with RPP4.

It is found in the cytoplasm. It localises to the nucleus. Its subcellular location is the nucleolus. Its function is as follows. Non-catalytic component of the RNA exosome complex which has 3'-&gt;5' exoribonuclease activity and participates in a multitude of cellular RNA processing, maturation and degradation events. In vitro, is a processive phosphorolytic exonuclease and requires a single-stranded poly(A) tail on the substrate RNA for its activity. Can complement the growth defect of a yeast mutant lacking RRP41 exonuclease. Required for normal development of female gametophytes. The polypeptide is Exosome complex component RRP41 homolog (Arabidopsis thaliana (Mouse-ear cress)).